A 657-amino-acid polypeptide reads, in one-letter code: Translation factor GUF1, mitochondrial (657 aa).

The transit peptide at 1–39 directs the protein to the mitochondrion; the sequence is MRGCLQSVKWLTSAVRQSQSLTSSTRFPRRLFNTSTLHY. Residues 59-239 enclose the tr-type G domain; that stretch reads ERFRNFCIVA…TVIEQVPAPV (181 aa). Residues 68–75, 132–136, and 186–189 each bind GTP; these read AHVDHGKS, DTPGH, and NKVD.

This sequence belongs to the TRAFAC class translation factor GTPase superfamily. Classic translation factor GTPase family. LepA subfamily.

The protein resides in the mitochondrion inner membrane. The catalysed reaction is GTP + H2O = GDP + phosphate + H(+). In terms of biological role, promotes mitochondrial protein synthesis. May act as a fidelity factor of the translation reaction, by catalyzing a one-codon backward translocation of tRNAs on improperly translocated ribosomes. Binds to mitochondrial ribosomes in a GTP-dependent manner. This chain is Translation factor GUF1, mitochondrial, found in Blastomyces gilchristii (strain SLH14081) (Blastomyces dermatitidis).